We begin with the raw amino-acid sequence, 491 residues long: Transcription factor AP-2-alpha (491 aa).

The segment at 74–161 (GASNGTARLP…GQRQSQESGL (88 aa)) is disordered. The short motif at 111–116 (YFPPPY) is the PPxY motif element. 2 stretches are compositionally biased toward low complexity: residues 119-128 (IYPQSQDPYS) and 142-155 (QPQPQHPGWPGQRQ). Glycyl lysine isopeptide (Lys-Gly) (interchain with G-Cter in SUMO2) cross-links involve residues lysine 231 and lysine 238. Residue serine 293 is modified to Phosphoserine; by PKA. Positions 334-464 (RRKAANVTLL…YLTEALKAMD (131 aa)) are H-S-H (helix-span-helix), dimerization. Polar residues predominate over residues 468–481 (LSNNPNSHTDNSAK). The disordered stretch occupies residues 468 to 491 (LSNNPNSHTDNSAKSSDKEEKHRK). A compositionally biased stretch (basic and acidic residues) spans 482–491 (SSDKEEKHRK).

It belongs to the AP-2 family. Binds DNA as a dimer. Can form homodimers or heterodimers with other AP-2 family members. Interacts with WWOX. Interacts with CITED4. Interacts with UBE2I. Interacts with RALBP1 in a complex also containing EPN1 and NUMB during interphase and mitosis. Interacts with KCTD1; this interaction represses transcription activation. Interacts (via C-terminus) with CITED2 (via C-terminus); the interaction stimulates TFAP2A-transcriptional activation. Interacts (via N-terminus) with EP300 (via N-terminus); the interaction requires CITED2. Interacts with KCTD15; this interaction inhibits TFAP2A transcriptional activation.

Its subcellular location is the nucleus. Sequence-specific DNA-binding protein that interacts with inducible viral and cellular enhancer elements to regulate transcription of selected genes. AP-2 factors bind to the consensus sequence 5'-GCCNNNGGC-3' and activate genes involved in a large spectrum of important biological functions including proper eye, face, body wall, limb and neural tube development. They also suppress a number of genes including MCAM/MUC18, C/EBP alpha and MYC. AP-2-alpha is the only AP-2 protein required for early morphogenesis of the lens vesicle. Together with the CITED2 coactivator, stimulates the PITX2 P1 promoter transcription activation. Associates with chromatin to the PITX2 P1 promoter region. The polypeptide is Transcription factor AP-2-alpha (TFAP2A) (Ovis aries (Sheep)).